Consider the following 283-residue polypeptide: NADPH-dependent 7-cyano-7-deazaguanine reductase (283 aa).

90-92 (IES) lines the substrate pocket. Residue 92–93 (SK) participates in NADPH binding. The active-site Thioimide intermediate is the cysteine 191. The active-site Proton donor is the aspartate 198. 230-231 (HE) contacts substrate. Residue 259–260 (RG) coordinates NADPH.

It belongs to the GTP cyclohydrolase I family. QueF type 2 subfamily. In terms of assembly, homodimer.

The protein resides in the cytoplasm. It carries out the reaction 7-aminomethyl-7-carbaguanine + 2 NADP(+) = 7-cyano-7-deazaguanine + 2 NADPH + 3 H(+). The protein operates within tRNA modification; tRNA-queuosine biosynthesis. Functionally, catalyzes the NADPH-dependent reduction of 7-cyano-7-deazaguanine (preQ0) to 7-aminomethyl-7-deazaguanine (preQ1). The polypeptide is NADPH-dependent 7-cyano-7-deazaguanine reductase (Tolumonas auensis (strain DSM 9187 / NBRC 110442 / TA 4)).